A 340-amino-acid polypeptide reads, in one-letter code: Glyceraldehyde-3-phosphate dehydrogenase (340 aa).

NAD(+) contacts are provided by residues 11-12 and G111; that span reads SI. Position 140-142 (140-142) interacts with D-glyceraldehyde 3-phosphate; sequence SCN. C141 functions as the Nucleophile in the catalytic mechanism. An NAD(+)-binding site is contributed by R169. 195-196 is a D-glyceraldehyde 3-phosphate binding site; sequence HG. Q303 provides a ligand contact to NAD(+).

This sequence belongs to the glyceraldehyde-3-phosphate dehydrogenase family. In terms of assembly, homotetramer.

Its subcellular location is the cytoplasm. The catalysed reaction is D-glyceraldehyde 3-phosphate + phosphate + NADP(+) = (2R)-3-phospho-glyceroyl phosphate + NADPH + H(+). It catalyses the reaction D-glyceraldehyde 3-phosphate + phosphate + NAD(+) = (2R)-3-phospho-glyceroyl phosphate + NADH + H(+). The protein operates within carbohydrate degradation; glycolysis; pyruvate from D-glyceraldehyde 3-phosphate: step 1/5. This chain is Glyceraldehyde-3-phosphate dehydrogenase, found in Methanococcus maripaludis (strain DSM 14266 / JCM 13030 / NBRC 101832 / S2 / LL).